Here is a 300-residue protein sequence, read N- to C-terminus: Ribosomal protein bS6--L-glutamate ligase (300 aa).

One can recognise an ATP-grasp domain in the interval 104–287; that stretch reads MQLLARQGID…IAGKMIRWIE (184 aa). ATP-binding positions include Lys141, 178 to 179, Asp187, and 211 to 213; these read EY and RSN. Asp248, Glu260, and Asn262 together coordinate Mg(2+). 3 residues coordinate Mn(2+): Asp248, Glu260, and Asn262.

Belongs to the RimK family. Mg(2+) is required as a cofactor. Mn(2+) serves as cofactor.

Functionally, an L-glutamate ligase that catalyzes the ATP-dependent post-translational addition of glutamate residues to the C-terminus of ribosomal protein bS6 (RpsF). Is also able to catalyze the synthesis of poly-alpha-glutamate in vitro, via ATP hydrolysis from unprotected glutamate as substrate. The number of glutamate residues added to either RpsF or to poly-alpha-glutamate changes with pH. This is Ribosomal protein bS6--L-glutamate ligase from Shigella boydii serotype 4 (strain Sb227).